The chain runs to 302 residues: Ribonucleoside-diphosphate reductase small subunit (302 aa).

Fe cation is bound by residues glutamate 61, glutamate 91, and histidine 94. The active site involves tyrosine 98. A helical transmembrane segment spans residues 147 to 167 (ILVFLLIEGIFFISSFYSIAL). Positions 154, 188, and 191 each coordinate Fe cation.

This sequence belongs to the ribonucleoside diphosphate reductase small chain family. As to quaternary structure, heterotetramer composed of a homodimer of the large subunit (R1) and a homodimer of the small subunit (R2). Larger multisubunit protein complex are also active, composed of (R1)n(R2)n. The cofactor is Fe cation.

It is found in the host membrane. It carries out the reaction a 2'-deoxyribonucleoside 5'-diphosphate + [thioredoxin]-disulfide + H2O = a ribonucleoside 5'-diphosphate + [thioredoxin]-dithiol. Functionally, ribonucleoside-diphosphate reductase holoenzyme provides the precursors necessary for viral DNA synthesis. Allows virus growth in non-dividing cells, as well as reactivation from latency in infected hosts. Catalyzes the biosynthesis of deoxyribonucleotides from the corresponding ribonucleotides. The polypeptide is Ribonucleoside-diphosphate reductase small subunit (Homo sapiens (Human)).